Here is a 430-residue protein sequence, read N- to C-terminus: Probable protein phosphatase 1N (430 aa).

Residues 16–65 form a disordered region; the sequence is CKKKEREKEGREEEEEEEAGRRAPEGPRSLLTAPRRAQRPHGGAEASGGL. The segment covering 17 to 26 has biased composition (basic and acidic residues); that stretch reads KKKEREKEGR. A PPM-type phosphatase domain is found at 66-326; the sequence is RFGASAAQGW…DNMTCILVCF (261 aa). D103, G104, D274, and D317 together coordinate Mn(2+). The disordered stretch occupies residues 407–430; it reads GEKGQDGAGKSNPTHLGSALDMEA.

This sequence belongs to the PP2C family. The cofactor is Mg(2+). Mn(2+) is required as a cofactor.

It carries out the reaction O-phospho-L-seryl-[protein] + H2O = L-seryl-[protein] + phosphate. The catalysed reaction is O-phospho-L-threonyl-[protein] + H2O = L-threonyl-[protein] + phosphate. This is Probable protein phosphatase 1N (PPM1N) from Homo sapiens (Human).